The primary structure comprises 217 residues: ATP-dependent Clp protease proteolytic subunit (217 aa).

Ser119 functions as the Nucleophile in the catalytic mechanism. His144 is an active-site residue.

The protein belongs to the peptidase S14 family. As to quaternary structure, fourteen ClpP subunits assemble into 2 heptameric rings which stack back to back to give a disk-like structure with a central cavity, resembling the structure of eukaryotic proteasomes.

It localises to the cytoplasm. The enzyme catalyses Hydrolysis of proteins to small peptides in the presence of ATP and magnesium. alpha-casein is the usual test substrate. In the absence of ATP, only oligopeptides shorter than five residues are hydrolyzed (such as succinyl-Leu-Tyr-|-NHMec, and Leu-Tyr-Leu-|-Tyr-Trp, in which cleavage of the -Tyr-|-Leu- and -Tyr-|-Trp bonds also occurs).. Functionally, cleaves peptides in various proteins in a process that requires ATP hydrolysis. Has a chymotrypsin-like activity. Plays a major role in the degradation of misfolded proteins. The sequence is that of ATP-dependent Clp protease proteolytic subunit from Bordetella petrii (strain ATCC BAA-461 / DSM 12804 / CCUG 43448).